The primary structure comprises 99 residues: Protein AC4 (99 aa).

The protein belongs to the geminiviridae protein AC4/C4 family.

Functionally, pathogenicity determinant. May act as a suppressor of RNA-mediated gene silencing, also known as post-transcriptional gene silencing (PTGS), a mechanism of plant viral defense that limits the accumulation of viral RNAs. This chain is Protein AC4, found in Glycine max (Soybean).